Reading from the N-terminus, the 356-residue chain is Galectin-9C (356 aa).

Residues 17–148 (FSGTIQGGLQ…SVQLSYISFQ (132 aa)) enclose the Galectin 1 domain. Position 82-88 (82-88 (WGPEERK)) interacts with a beta-D-galactoside. A disordered region spans residues 170-190 (FPPRPRGRRQKPPSVRPANPA). The 129-residue stretch at 228 to 356 (FITTIPGGLY…GDIQLTHVQT (129 aa)) folds into the Galectin 2 domain. Position 288–294 (288–294 (WGSEERS)) interacts with a beta-D-galactoside.

Its function is as follows. Binds galactosides. The sequence is that of Galectin-9C (LGALS9C) from Homo sapiens (Human).